A 120-amino-acid chain; its full sequence is Galanin-like peptide (120 aa).

The signal sequence occupies residues 1 to 22 (MALTVPLIVLAVLLSLMESPAS). Positions 85-120 (SLGETFAKPDSGVTFVGVPDVVPWKRIRPGTTRFQI) are excised as a propeptide.

This sequence belongs to the galanin family.

The protein resides in the secreted. In terms of biological role, hypothalamic neuropeptide which binds to the G-protein-coupled galanin receptors (GALR1, GALR2 and GALR3). Involved in a large number of putative physiological functions in CNS homeostatic processes, including the regulation of gonadotropin-releasing hormone secretion. The polypeptide is Galanin-like peptide (GALP) (Sus scrofa (Pig)).